Consider the following 121-residue polypeptide: Large ribosomal subunit protein bL12 (121 aa).

The protein belongs to the bacterial ribosomal protein bL12 family. As to quaternary structure, homodimer. Part of the ribosomal stalk of the 50S ribosomal subunit. Forms a multimeric L10(L12)X complex, where L10 forms an elongated spine to which 2 to 4 L12 dimers bind in a sequential fashion. Binds GTP-bound translation factors.

Forms part of the ribosomal stalk which helps the ribosome interact with GTP-bound translation factors. Is thus essential for accurate translation. This is Large ribosomal subunit protein bL12 from Streptococcus agalactiae serotype V (strain ATCC BAA-611 / 2603 V/R).